Here is a 179-residue protein sequence, read N- to C-terminus: ATP synthase subunit delta (179 aa).

This sequence belongs to the ATPase delta chain family. As to quaternary structure, F-type ATPases have 2 components, F(1) - the catalytic core - and F(0) - the membrane proton channel. F(1) has five subunits: alpha(3), beta(3), gamma(1), delta(1), epsilon(1). F(0) has three main subunits: a(1), b(2) and c(10-14). The alpha and beta chains form an alternating ring which encloses part of the gamma chain. F(1) is attached to F(0) by a central stalk formed by the gamma and epsilon chains, while a peripheral stalk is formed by the delta and b chains.

It is found in the cell inner membrane. Functionally, f(1)F(0) ATP synthase produces ATP from ADP in the presence of a proton or sodium gradient. F-type ATPases consist of two structural domains, F(1) containing the extramembraneous catalytic core and F(0) containing the membrane proton channel, linked together by a central stalk and a peripheral stalk. During catalysis, ATP synthesis in the catalytic domain of F(1) is coupled via a rotary mechanism of the central stalk subunits to proton translocation. Its function is as follows. This protein is part of the stalk that links CF(0) to CF(1). It either transmits conformational changes from CF(0) to CF(1) or is implicated in proton conduction. The chain is ATP synthase subunit delta from Burkholderia vietnamiensis (strain G4 / LMG 22486) (Burkholderia cepacia (strain R1808)).